The following is a 55-amino-acid chain: Large ribosomal subunit protein bL33 (55 aa).

Belongs to the bacterial ribosomal protein bL33 family.

The chain is Large ribosomal subunit protein bL33 from Ruegeria pomeroyi (strain ATCC 700808 / DSM 15171 / DSS-3) (Silicibacter pomeroyi).